The following is a 30-amino-acid chain: Trypsin inhibitor 6 (30 aa).

3 disulfides stabilise this stretch: Cys4–Cys21, Cys11–Cys23, and Cys17–Cys29.

This sequence belongs to the protease inhibitor I7 (squash-type serine protease inhibitor) family.

The protein localises to the secreted. Functionally, strongly inhibits trypsin, weakly inhibits chymotrypsin. The protein is Trypsin inhibitor 6 of Cyclanthera pedata (Achocha).